A 63-amino-acid polypeptide reads, in one-letter code: ATP synthase F(0) complex subunit 8 (63 aa).

Residues 8–24 (MWLLTILSMLLTLFVLF) form a helical membrane-spanning segment. Position 57 is an N6-acetyllysine (Lys-57).

It belongs to the ATPase protein 8 family. Component of the ATP synthase complex composed at least of ATP5F1A/subunit alpha, ATP5F1B/subunit beta, ATP5MC1/subunit c (homooctomer), MT-ATP6/subunit a, MT-ATP8/subunit 8, ATP5ME/subunit e, ATP5MF/subunit f, ATP5MG/subunit g, ATP5MK/subunit k, ATP5MJ/subunit j, ATP5F1C/subunit gamma, ATP5F1D/subunit delta, ATP5F1E/subunit epsilon, ATP5PF/subunit F6, ATP5PB/subunit b, ATP5PD/subunit d, ATP5PO/subunit OSCP. ATP synthase complex consists of a soluble F(1) head domain (subunits alpha(3) and beta(3)) - the catalytic core - and a membrane F(0) domain - the membrane proton channel (subunits c, a, 8, e, f, g, k and j). These two domains are linked by a central stalk (subunits gamma, delta, and epsilon) rotating inside the F1 region and a stationary peripheral stalk (subunits F6, b, d, and OSCP). Interacts with PRICKLE3.

The protein localises to the mitochondrion membrane. Functionally, subunit 8, of the mitochondrial membrane ATP synthase complex (F(1)F(0) ATP synthase or Complex V) that produces ATP from ADP in the presence of a proton gradient across the membrane which is generated by electron transport complexes of the respiratory chain. ATP synthase complex consist of a soluble F(1) head domain - the catalytic core - and a membrane F(1) domain - the membrane proton channel. These two domains are linked by a central stalk rotating inside the F(1) region and a stationary peripheral stalk. During catalysis, ATP synthesis in the catalytic domain of F(1) is coupled via a rotary mechanism of the central stalk subunits to proton translocation. In vivo, can only synthesize ATP although its ATP hydrolase activity can be activated artificially in vitro. Part of the complex F(0) domain. The protein is ATP synthase F(0) complex subunit 8 of Balaenoptera physalus (Fin whale).